We begin with the raw amino-acid sequence, 33 residues long: Cytochrome b6-f complex subunit 8 (33 aa).

Residues 2 to 22 form a helical membrane-spanning segment; it reads IFTLGWASLAAIFTFSIAMVV.

Belongs to the PetN family. The 4 large subunits of the cytochrome b6-f complex are cytochrome b6, subunit IV (17 kDa polypeptide, PetD), cytochrome f and the Rieske protein, while the 4 small subunits are PetG, PetL, PetM and PetN. The complex functions as a dimer.

Its subcellular location is the cellular thylakoid membrane. In terms of biological role, component of the cytochrome b6-f complex, which mediates electron transfer between photosystem II (PSII) and photosystem I (PSI), cyclic electron flow around PSI, and state transitions. The protein is Cytochrome b6-f complex subunit 8 of Prochlorococcus marinus (strain NATL2A).